We begin with the raw amino-acid sequence, 490 residues long: Bifunctional protein HldE (490 aa).

Residues 1–330 are ribokinase; it reads MDRTNIENFL…EAMAHHALEY (330 aa). 205 to 208 contacts ATP; it reads NRKE. D275 is an active-site residue. Residues 356–490 form a cytidylyltransferase region; that stretch reads FTNGCFDLLH…ERILDRYEQG (135 aa).

The protein in the N-terminal section; belongs to the carbohydrate kinase PfkB family. In the C-terminal section; belongs to the cytidylyltransferase family. Homodimer.

The catalysed reaction is D-glycero-beta-D-manno-heptose 7-phosphate + ATP = D-glycero-beta-D-manno-heptose 1,7-bisphosphate + ADP + H(+). The enzyme catalyses D-glycero-beta-D-manno-heptose 1-phosphate + ATP + H(+) = ADP-D-glycero-beta-D-manno-heptose + diphosphate. The protein operates within nucleotide-sugar biosynthesis; ADP-L-glycero-beta-D-manno-heptose biosynthesis; ADP-L-glycero-beta-D-manno-heptose from D-glycero-beta-D-manno-heptose 7-phosphate: step 1/4. It functions in the pathway nucleotide-sugar biosynthesis; ADP-L-glycero-beta-D-manno-heptose biosynthesis; ADP-L-glycero-beta-D-manno-heptose from D-glycero-beta-D-manno-heptose 7-phosphate: step 3/4. In terms of biological role, catalyzes the phosphorylation of D-glycero-D-manno-heptose 7-phosphate at the C-1 position to selectively form D-glycero-beta-D-manno-heptose-1,7-bisphosphate. Functionally, catalyzes the ADP transfer from ATP to D-glycero-beta-D-manno-heptose 1-phosphate, yielding ADP-D-glycero-beta-D-manno-heptose. The sequence is that of Bifunctional protein HldE from Syntrophotalea carbinolica (strain DSM 2380 / NBRC 103641 / GraBd1) (Pelobacter carbinolicus).